The chain runs to 389 residues: GTPase Obg (389 aa).

The Obg domain maps to M1–L159. The OBG-type G domain maps to A160–K333. GTP-binding positions include G166 to S173, F191 to V195, D213 to G216, N283 to D286, and A314 to I316. The Mg(2+) site is built by S173 and T193. The tract at residues Q362 to R389 is disordered. Over residues E364 to V383 the composition is skewed to acidic residues.

This sequence belongs to the TRAFAC class OBG-HflX-like GTPase superfamily. OBG GTPase family. Monomer. The cofactor is Mg(2+).

Its subcellular location is the cytoplasm. An essential GTPase which binds GTP, GDP and possibly (p)ppGpp with moderate affinity, with high nucleotide exchange rates and a fairly low GTP hydrolysis rate. Plays a role in control of the cell cycle, stress response, ribosome biogenesis and in those bacteria that undergo differentiation, in morphogenesis control. The protein is GTPase Obg of Proteus mirabilis (strain HI4320).